The primary structure comprises 105 residues: Urease subunit beta (105 aa).

Belongs to the urease beta subunit family. In terms of assembly, heterotrimer of UreA (gamma), UreB (beta) and UreC (alpha) subunits. Three heterotrimers associate to form the active enzyme.

It is found in the cytoplasm. It carries out the reaction urea + 2 H2O + H(+) = hydrogencarbonate + 2 NH4(+). Its pathway is nitrogen metabolism; urea degradation; CO(2) and NH(3) from urea (urease route): step 1/1. In Mycobacterium sp. (strain JLS), this protein is Urease subunit beta.